Reading from the N-terminus, the 284-residue chain is Cell division protein ZipA (284 aa).

M1 is a topological domain (periplasmic). The helical transmembrane segment at 2–22 threads the bilayer; that stretch reads EIGLREWLIVIGIIVIAGILF. Residues 23 to 284 lie on the Cytoplasmic side of the membrane; the sequence is DGWRRMRGGK…FERRALTQKR (262 aa). Residues 47–140 form a disordered region; that stretch reads PDDEGSAELL…SASHSDKDQP (94 aa). Composition is skewed to basic and acidic residues over residues 62–75, 83–102, and 119–140; these read LDTH…EHDL, REPR…EPHQ, and SRDD…KDQP.

This sequence belongs to the ZipA family. Interacts with FtsZ via their C-terminal domains.

The protein resides in the cell inner membrane. In terms of biological role, essential cell division protein that stabilizes the FtsZ protofilaments by cross-linking them and that serves as a cytoplasmic membrane anchor for the Z ring. Also required for the recruitment to the septal ring of downstream cell division proteins. The polypeptide is Cell division protein ZipA (Pseudomonas fluorescens (strain ATCC BAA-477 / NRRL B-23932 / Pf-5)).